The primary structure comprises 200 residues: MTRLLIVGPPGAGKGTQAKRIASEYGIPDVSTGDIFRQNIKDRTELGQQVQALVDAGNYVPDELTNRLVTARLQEEDARAGFLLDGYPRTLAQVAYLEELLQGWGQELDAVIQLVADEDEVVARLTRRAAEQGRADDGEEEIRHRQEVYVRETSPLIDVYRERGLLLEVDGLGEVDEVAERIRAALAGRGVRPSSDAGRA.

ATP is bound at residue 11–16 (GAGKGT). Positions 31 to 60 (STGDIFRQNIKDRTELGQQVQALVDAGNYV) are NMP. AMP contacts are provided by residues Thr-32, Arg-37, 58–60 (NYV), 86–89 (GYPR), and Gln-93. The segment at 127–137 (RRAAEQGRADD) is LID. ATP is bound at residue Arg-128. AMP is bound by residues Arg-134 and Arg-145. An ATP-binding site is contributed by Gly-173.

This sequence belongs to the adenylate kinase family. Monomer.

It is found in the cytoplasm. It catalyses the reaction AMP + ATP = 2 ADP. The protein operates within purine metabolism; AMP biosynthesis via salvage pathway; AMP from ADP: step 1/1. Functionally, catalyzes the reversible transfer of the terminal phosphate group between ATP and AMP. Plays an important role in cellular energy homeostasis and in adenine nucleotide metabolism. The sequence is that of Adenylate kinase from Clavibacter michiganensis subsp. michiganensis (strain NCPPB 382).